We begin with the raw amino-acid sequence, 330 residues long: Aspartate--ammonia ligase (330 aa).

This sequence belongs to the class-II aminoacyl-tRNA synthetase family. AsnA subfamily.

The protein localises to the cytoplasm. It catalyses the reaction L-aspartate + NH4(+) + ATP = L-asparagine + AMP + diphosphate + H(+). Its pathway is amino-acid biosynthesis; L-asparagine biosynthesis; L-asparagine from L-aspartate (ammonia route): step 1/1. The chain is Aspartate--ammonia ligase from Haemophilus influenzae (strain ATCC 51907 / DSM 11121 / KW20 / Rd).